The chain runs to 591 residues: Calnexin (591 aa).

The N-terminal stretch at 1-20 (MEGKWLLCLLLVLGTAAVEA) is a signal peptide. The Lumenal segment spans residues 21-482 (HDGHDDDAID…QMLEAAEERP (462 aa)). The Ca(2+) site is built by S75 and D118. Residue K138 is modified to N6-acetyllysine. Cysteines 161 and 195 form a disulfide. Positions 165, 167, 186, and 193 each coordinate an alpha-D-glucoside. The tract at residues 261–347 (GNLLNDMTPP…EKPEDWDEDM (87 aa)) is disordered. The segment covering 275–320 (REIEDPEDRKPEDWDERPKIADPDAVKPDDWDEDAPSKIPDEEATK) has biased composition (basic and acidic residues). Positions 277–410 (IEDPEDRKPE…RKIPNPDFFE (134 aa)) are p domain (Extended arm). Tandem repeats lie at residues 279–291 (DPED…WDER), 296–308 (DPDA…WDED), 315–327 (DEEA…WLDD), 334–346 (DPDA…WDED), and 349–359 (GEWEAPQIANP). 2 4 X approximate repeats regions span residues 279–346 (DPED…WDED) and 349–406 (GEWE…IPNP). Acidic residues predominate over residues 324 to 347 (WLDDEPEYIPDPDAEKPEDWDEDM). Residues 327–360 (DEPEYIPDPDAEKPEDWDEDMDGEWEAPQIANPK) are interaction with PPIB. C361 and C367 are oxidised to a cystine. 3 consecutive repeat copies span residues 368-378 (GVWQRPMIDNP), 382-392 (GKWKPPMIDNP), and 396-406 (GIWKPRKIPNP). Residue E426 coordinates an alpha-D-glucoside. Residue D437 participates in Ca(2+) binding. A helical transmembrane segment spans residues 483-503 (WLWVVYILTVALPVFLVILFC). S-palmitoyl cysteine attachment occurs at residues C503 and C504. Residues 504-591 (CSGKKQSNAM…SPRNRKPRRE (88 aa)) are Cytoplasmic-facing. Positions 504–591 (CSGKKQSNAM…SPRNRKPRRE (88 aa)) are sufficient to mediate interaction with SGIP1. The segment covering 514-539 (EYKKTDAPQPDVKDEEGKEEEKNKRD) has biased composition (basic and acidic residues). The interval 514-591 (EYKKTDAPQP…SPRNRKPRRE (78 aa)) is disordered. S553 is subject to Phosphoserine. A compositionally biased stretch (acidic residues) spans 555 to 568 (AEEDGVTGSQDEED). The residue at position 561 (T561) is a Phosphothreonine. S563 carries the phosphoserine; by MAPK3 modification. S582 bears the Phosphoserine mark.

Belongs to the calreticulin family. As to quaternary structure, interacts with MAPK3/ERK1. Interacts with KCNH2. Associates with ribosomes. The palmitoylated form interacts with the ribosome-translocon complex component SSR1, promoting efficient folding of glycoproteins. Interacts with SERPINA2P/SERPINA2 and with the S and Z variants of SERPINA1. Interacts with SGIP1; involved in negative regulation of endocytosis. Interacts with PPIB. Interacts with SMIM22. Interacts with TMX2. Interacts with TMEM35A/NACHO. Interacts with CHRNA7. Interacts with reticulophagy regulators RETREG2 and RETREG3. Interacts with DNM1L; may form part of a larger protein complex at the ER-mitochondrial interface during mitochondrial fission. Interacts with ADAM7. Post-translationally, phosphorylated at Ser-563 by MAPK3/ERK1. Phosphorylation by MAPK3/ERK1 increases its association with ribosomes. In terms of processing, palmitoylation by DHHC6 leads to the preferential localization to the perinuclear rough ER. It mediates the association of calnexin with the ribosome-translocon complex (RTC) which is required for efficient folding of glycosylated proteins. Ubiquitinated, leading to proteasomal degradation. Probably ubiquitinated by ZNRF4. Expressed in sperm (at protein level).

Its subcellular location is the endoplasmic reticulum membrane. The protein localises to the mitochondrion membrane. The protein resides in the melanosome membrane. Calcium-binding protein that interacts with newly synthesized monoglucosylated glycoproteins in the endoplasmic reticulum. It may act in assisting protein assembly and/or in the retention within the ER of unassembled protein subunits. It seems to play a major role in the quality control apparatus of the ER by the retention of incorrectly folded proteins. Associated with partial T-cell antigen receptor complexes that escape the ER of immature thymocytes, it may function as a signaling complex regulating thymocyte maturation. Additionally it may play a role in receptor-mediated endocytosis at the synapse. The polypeptide is Calnexin (Canx) (Mus musculus (Mouse)).